Consider the following 120-residue polypeptide: Cell division protein FtsL (120 aa).

Residues 1–22 (MSNVAYKSNLEPNRVHREAEQP) form a disordered region. Topologically, residues 1–37 (MSNVAYKSNLEPNRVHREAEQPKKQILKRGQMTLGEK) are cytoplasmic. Over residues 13 to 22 (NRVHREAEQP) the composition is skewed to basic and acidic residues. Residues 38 to 58 (VIITIALAIVLVVAFRIISVQ) traverse the membrane as a helical segment. Topologically, residues 59–120 (AQIYTVNQEI…GDNVKVVDGQ (62 aa)) are extracellular.

Belongs to the FtsL family.

It is found in the cell membrane. Its function is as follows. Essential cell division protein. The polypeptide is Cell division protein FtsL (Listeria monocytogenes serovar 1/2a (strain ATCC BAA-679 / EGD-e)).